A 190-amino-acid chain; its full sequence is ATP synthase subunit b (190 aa).

Residues 34–54 (LDIFETNLINLAILVGILFYF) traverse the membrane as a helical segment.

Belongs to the ATPase B chain family. In terms of assembly, F-type ATPases have 2 components, F(1) - the catalytic core - and F(0) - the membrane proton channel. F(1) has five subunits: alpha(3), beta(3), gamma(1), delta(1), epsilon(1). F(0) has four main subunits: a(1), b(1), b'(1) and c(10-14). The alpha and beta chains form an alternating ring which encloses part of the gamma chain. F(1) is attached to F(0) by a central stalk formed by the gamma and epsilon chains, while a peripheral stalk is formed by the delta, b and b' chains.

Its subcellular location is the cellular thylakoid membrane. F(1)F(0) ATP synthase produces ATP from ADP in the presence of a proton or sodium gradient. F-type ATPases consist of two structural domains, F(1) containing the extramembraneous catalytic core and F(0) containing the membrane proton channel, linked together by a central stalk and a peripheral stalk. During catalysis, ATP synthesis in the catalytic domain of F(1) is coupled via a rotary mechanism of the central stalk subunits to proton translocation. Functionally, component of the F(0) channel, it forms part of the peripheral stalk, linking F(1) to F(0). This Nostoc punctiforme (strain ATCC 29133 / PCC 73102) protein is ATP synthase subunit b.